Consider the following 330-residue polypeptide: Ig gamma-2A chain C region, A allele (330 aa).

3 Ig-like domains span residues 6-98 (PSVY…KKIE), 121-220 (PSVF…RTIS), and 229-325 (PQVY…KSFS). Disulfide bonds link C27/C82, C144/C204, and C250/C308. A glycan (N-linked (GlcNAc...) asparagine) is linked at N180.

This Mus musculus (Mouse) protein is Ig gamma-2A chain C region, A allele (Ighg).